A 432-amino-acid polypeptide reads, in one-letter code: Trigger factor (432 aa).

The region spanning 161-246 is the PPIase FKBP-type domain; it reads EDRVTIDFTG…LKKVEERELP (86 aa).

It belongs to the FKBP-type PPIase family. Tig subfamily. Homodimer and monomer. In vivo most of the ribosomes are in complex with monomeric TF. Uncomplexed TF, however, is in a monomer-dimer equilibrium with approximately two thirds of TF existing in a dimeric state.

It localises to the cytoplasm. It catalyses the reaction [protein]-peptidylproline (omega=180) = [protein]-peptidylproline (omega=0). Functionally, involved in protein export. Acts as a chaperone by maintaining the newly synthesized protein in an open conformation. Functions as a peptidyl-prolyl cis-trans isomerase. The protein is Trigger factor of Shigella boydii serotype 4 (strain Sb227).